The chain runs to 138 residues: ATP synthase epsilon chain (138 aa).

It belongs to the ATPase epsilon chain family. In terms of assembly, F-type ATPases have 2 components, CF(1) - the catalytic core - and CF(0) - the membrane proton channel. CF(1) has five subunits: alpha(3), beta(3), gamma(1), delta(1), epsilon(1). CF(0) has three main subunits: a, b and c.

The protein resides in the cell inner membrane. Produces ATP from ADP in the presence of a proton gradient across the membrane. This Delftia acidovorans (strain DSM 14801 / SPH-1) protein is ATP synthase epsilon chain.